Consider the following 568-residue polypeptide: 2-succinyl-5-enolpyruvyl-6-hydroxy-3-cyclohexene-1-carboxylate synthase (568 aa).

This sequence belongs to the TPP enzyme family. MenD subfamily. Homodimer. The cofactor is Mg(2+). Mn(2+) is required as a cofactor. Thiamine diphosphate serves as cofactor.

It carries out the reaction isochorismate + 2-oxoglutarate + H(+) = 5-enolpyruvoyl-6-hydroxy-2-succinyl-cyclohex-3-ene-1-carboxylate + CO2. It functions in the pathway quinol/quinone metabolism; 1,4-dihydroxy-2-naphthoate biosynthesis; 1,4-dihydroxy-2-naphthoate from chorismate: step 2/7. The protein operates within quinol/quinone metabolism; menaquinone biosynthesis. Its function is as follows. Catalyzes the thiamine diphosphate-dependent decarboxylation of 2-oxoglutarate and the subsequent addition of the resulting succinic semialdehyde-thiamine pyrophosphate anion to isochorismate to yield 2-succinyl-5-enolpyruvyl-6-hydroxy-3-cyclohexene-1-carboxylate (SEPHCHC). The protein is 2-succinyl-5-enolpyruvyl-6-hydroxy-3-cyclohexene-1-carboxylate synthase of Actinobacillus pleuropneumoniae serotype 7 (strain AP76).